Reading from the N-terminus, the 289-residue chain is Syntaxin-2 (289 aa).

The Cytoplasmic segment spans residues 1 to 265 (MRDRLPDLTA…KYQSKARRKK (265 aa)). Residues 68-101 (EGKIKEELEDLDKEIKKTANRIRGKLKSIEQSCD) are a coiled coil. The t-SNARE coiled-coil homology domain occupies 192–254 (LNEIESRHKD…EHAKEETKKA (63 aa)). A helical; Anchor for type IV membrane protein membrane pass occupies residues 266–289 (WIIAAVAVAVIAVLALIIGLSVGK).

It belongs to the syntaxin family. Interacts with SYT6 and SYT8; the interaction is Ca(2+)-dependent.

It is found in the membrane. Functionally, essential for epithelial morphogenesis. May mediate Ca(2+)-regulation of exocytosis acrosomal reaction in sperm. In Mus musculus (Mouse), this protein is Syntaxin-2 (Stx2).